The chain runs to 261 residues: Calbindin (261 aa).

Ala2 carries the post-translational modification N-acetylalanine. The interaction with RANBP9 stretch occupies residues 2–7 (AESHLQ). EF-hand domains are found at residues 11 to 46 (ITASQFFEIWLHFDADGSGYLEGKELQNLIQELLQA), 53 to 88 (ELSPEMKTFVDQYGQRDDGKIGIVELAHVLPTEENF), 98 to 133 (KSCEEFMKTWRKYDTDHSGFIETEELKNFLKDLLEK), 142 to 177 (KLAEYTDLMLKLFDSNNDGKLELTEMARLLPVQENF), and 186 to 221 (MCGKEFNKAFELYDQDGNGYIDENELDALLKDLCEK). The Ca(2+) site is built by Asp24, Asp26, Ser28, Tyr30, and Glu35. Residues Asp111, Asp113, Ser115, Glu122, Asp155, Asn157, Asp159, Lys161, Glu166, Asp199, Asp201, Asn203, Tyr205, and Glu210 each coordinate Ca(2+).

It belongs to the calbindin family. In terms of assembly, interacts with RANBP9.

Buffers cytosolic calcium. May stimulate a membrane Ca(2+)-ATPase and a 3',5'-cyclic nucleotide phosphodiesterase. The chain is Calbindin (Calb1) from Rattus norvegicus (Rat).